Here is a 187-residue protein sequence, read N- to C-terminus: Interferon beta (187 aa).

The first 21 residues, 1 to 21, serve as a signal peptide directing secretion; sequence MTSRSLLPFVLSLLLPRIIMA. Phosphotyrosine is present on Tyr24. Cysteines 53 and 162 form a disulfide. Residues Asn76, Asn95, Asn132, and Asn158 are each glycosylated (N-linked (GlcNAc...) asparagine).

Belongs to the alpha/beta interferon family. Monomer.

The protein localises to the secreted. Functionally, type I interferon cytokine that plays a key role in the innate immune response to infection, developing tumors and other inflammatory stimuli. Signals via binding to high-affinity (IFNAR2) and low-affinity (IFNAR1) heterodimeric receptor, activating the canonical Jak-STAT signaling pathway resulting in transcriptional activation or repression of interferon-regulated genes that encode the effectors of the interferon response, such as antiviral proteins, regulators of cell proliferation and differentiation, and immunoregulatory proteins. Signals mostly via binding to a IFNAR1-IFNAR2 heterodimeric receptor, but can also function with IFNAR1 alone and independently of Jak-STAT pathways. Elicits a wide variety of responses, including antiviral and antibacterial activities, and can regulate the development of B-cells, myelopoiesis and lipopolysaccharide (LPS)-inducible production of tumor necrosis factor. Plays a role in neuronal homeostasis by regulating dopamine turnover and protecting dopaminergic neurons: acts by promoting neuronal autophagy and alpha-synuclein clearance, thereby preventing dopaminergic neuron loss. IFNB1 is more potent than interferon-alpha (IFN-alpha) in inducing the apoptotic and antiproliferative pathways required for control of tumor cell growth. The sequence is that of Interferon beta (IFNB1) from Tachyglossus aculeatus aculeatus (Southeast Australian short-beaked echidna).